We begin with the raw amino-acid sequence, 1091 residues long: Sodium/potassium exporting P-type ATPase 2 (1091 aa).

Residues 1–63 lie on the Cytoplasmic side of the membrane; it reads MSEGTVKENN…LGDDTKIDYK (63 aa). Residues 64–84 form a helical membrane-spanning segment; the sequence is AMVLHQVCNAMIMVLVISMAI. At 85–90 the chain is on the extracellular side; sequence SFAVRD. A helical membrane pass occupies residues 91 to 111; sequence WITGGVISFVIAVNVLIGLVQ. Residues 112-282 lie on the Cytoplasmic side of the membrane; sequence EYKATKTMNS…TNVGTPLHRK (171 aa). Residues 283-303 form a helical membrane-spanning segment; it reads LSKLAVLLFWIAVLFAIIVMA. Residues 304–312 lie on the Extracellular side of the membrane; sequence SQKFDVDKR. Residues 313-333 traverse the membrane as a helical segment; sequence VAIYAICVALSMIPSSLVVVL. Topologically, residues 334-815 are cytoplasmic; it reads TITMSVGAAV…RRMTDNIQKF (482 aa). Asp-369 (4-aspartylphosphate intermediate) is an active-site residue. The Mg(2+) site is built by Asp-369 and Thr-371. Positions 371 and 483 each coordinate ATP. Residues 499–525 form a disordered region; that stretch reads ALTGEKSTNQSNENDQSSLSQHNEKPG. Polar residues predominate over residues 503 to 519; sequence EKSTNQSNENDQSSLSQ. 7 residues coordinate ATP: Lys-561, Arg-606, Thr-673, Gly-674, Asp-675, Arg-732, and Lys-738. Asp-757 is a Mg(2+) binding site. Asn-760 lines the ATP pocket. The helical transmembrane segment at 816 to 836 threads the bilayer; that stretch reads VLQLLAENVAQALYLIIGLVF. Residues 837–848 are Extracellular-facing; it reads RDENGKSVFPLS. Residues 849-869 traverse the membrane as a helical segment; the sequence is PVEVLWIIVVTSCFPAMGLGL. At 870–885 the chain is on the cytoplasmic side; the sequence is EKAAPDLMDRPPHDSE. Residues 886–906 form a helical membrane-spanning segment; sequence VGIFTWEVIIDTFAYGIIMTG. The Extracellular portion of the chain corresponds to 907 to 943; the sequence is SCMASFTGSLYGINSGRLGHDCDGTYNSSCRDVYRSR. A helical transmembrane segment spans residues 944 to 964; that stretch reads SAAFATMTWCALILAWEVVDM. Over 965 to 991 the chain is Cytoplasmic; it reads RRSFFRMHPDTDSPVKEFFRSIWGNQF. A helical membrane pass occupies residues 992–1012; the sequence is LFWSIIFGFVSAFPVVYIPVI. Residues 1013–1021 are Extracellular-facing; the sequence is NDKVFLHKP. The helical transmembrane segment at 1022 to 1042 threads the bilayer; it reads IGAEWGLAIAFTIAFWIGAEL. Over 1043–1091 the chain is Cytoplasmic; it reads YKCGKRRYFKTQRAHNPENDLESNNKRDPFEAYSTSTTIHTEVNIGIKQ.

The protein belongs to the cation transport ATPase (P-type) (TC 3.A.3) family. Type IID subfamily. It depends on Mg(2+) as a cofactor. Post-translationally, the active site is phosphorylated in presence of sodium or potassium and in conditions of higher pH. Not phosphorylated in presence of calcium ions.

It is found in the cell membrane. The catalysed reaction is Na(+)(in) + ATP + H2O = Na(+)(out) + ADP + phosphate + H(+). It catalyses the reaction K(+)(in) + ATP + H2O = K(+)(out) + ADP + phosphate + H(+). Functionally, catalyzes the hydrolysis of ATP coupled with the export of sodium and potassium from the cell. May export potassium less efficiently. May transport other cations such as lithium. Sodium/potassium efflux ATPases are involved in salt tolerance and maintaining the membrane potential across the plasma membrane in high salinity (Na+) or alkaline (K+) environments. This is Sodium/potassium exporting P-type ATPase 2 from Saccharomyces cerevisiae (strain ATCC 204508 / S288c) (Baker's yeast).